The following is a 138-amino-acid chain: MRITFVCTGNTCRSPIAESIAKKMLVDDTINSRGLFAIDGQSVSPESLEVIMEHNLPEPTVAKQFSEKDLNSDLILTMTDMHKQQLVSHYGDNGRIYQLSEYVGEIGDIVDPFGGSIDTYRQTFEQLLYLIGKLRTNS.

The Nucleophile role is filled by Cys-7. Arg-13 is an active-site residue. Catalysis depends on Asp-111, which acts as the Proton donor.

The protein belongs to the low molecular weight phosphotyrosine protein phosphatase family.

It carries out the reaction O-phospho-L-tyrosyl-[protein] + H2O = L-tyrosyl-[protein] + phosphate. Dephosphorylates the phosphotyrosine-containing proteins. This Staphylococcus haemolyticus (strain JCSC1435) protein is Low molecular weight protein-tyrosine-phosphatase PtpB (ptpB).